Here is a 196-residue protein sequence, read N- to C-terminus: Somatotropin (196 aa).

The first 18 residues, Met-1–Pro-18, serve as a signal peptide directing secretion. Pyrrolidone carboxylic acid is present on Gln-19. His-35 is a binding site for Zn(2+). An intrachain disulfide couples Cys-69 to Cys-169. Glu-178 provides a ligand contact to Zn(2+). Cysteines 186 and 194 form a disulfide.

This sequence belongs to the somatotropin/prolactin family.

It localises to the secreted. Growth hormone plays an important role in growth control and is involved in the regulation of several anabolic processes. Implicated as an osmoregulatory substance important for seawater adaptation. In Siganus guttatus (Orange-spotted spinefoot), this protein is Somatotropin (gh).